A 507-amino-acid chain; its full sequence is ATP synthase subunit alpha (507 aa).

170-177 (GDRQTGKT) is an ATP binding site.

Belongs to the ATPase alpha/beta chains family. In terms of assembly, F-type ATPases have 2 components, CF(1) - the catalytic core - and CF(0) - the membrane proton channel. CF(1) has five subunits: alpha(3), beta(3), gamma(1), delta(1), epsilon(1). CF(0) has three main subunits: a(1), b(2) and c(9-12). The alpha and beta chains form an alternating ring which encloses part of the gamma chain. CF(1) is attached to CF(0) by a central stalk formed by the gamma and epsilon chains, while a peripheral stalk is formed by the delta and b chains.

The protein localises to the cell inner membrane. The catalysed reaction is ATP + H2O + 4 H(+)(in) = ADP + phosphate + 5 H(+)(out). In terms of biological role, produces ATP from ADP in the presence of a proton gradient across the membrane. The alpha chain is a regulatory subunit. This Thermosipho africanus (strain TCF52B) protein is ATP synthase subunit alpha.